The sequence spans 443 residues: Cell division protein FtsA (443 aa).

It belongs to the FtsA/MreB family. Self-interacts. Interacts with FtsZ.

It is found in the cell inner membrane. In terms of biological role, cell division protein that is involved in the assembly of the Z ring. May serve as a membrane anchor for the Z ring. The sequence is that of Cell division protein FtsA from Agrobacterium fabrum (strain C58 / ATCC 33970) (Agrobacterium tumefaciens (strain C58)).